Reading from the N-terminus, the 310-residue chain is Putative S-adenosyl-L-methionine-dependent methyltransferase MUL_4763 (310 aa).

S-adenosyl-L-methionine contacts are provided by residues D137 and 166 to 167; that span reads DL.

This sequence belongs to the UPF0677 family.

Its function is as follows. Exhibits S-adenosyl-L-methionine-dependent methyltransferase activity. The chain is Putative S-adenosyl-L-methionine-dependent methyltransferase MUL_4763 from Mycobacterium ulcerans (strain Agy99).